The primary structure comprises 422 residues: Electron transfer flavoprotein subunit alpha (422 aa).

Residues 61 to 80 (KRIDRSGTQQGAGGGKASAS) are disordered. Residues 329–330 (SR), 343–347 (QVGAT), 360–367 (GISGAIQH), and Asn381 contribute to the FAD site.

Belongs to the ETF alpha-subunit/FixB family. As to quaternary structure, heterodimer of an alpha and a beta subunit. It depends on FAD as a cofactor.

Functionally, participates in the electron transfer process during N,N-dimethylglycine (DMG) degradation to sarcosine. The sequence is that of Electron transfer flavoprotein subunit alpha from Chromohalobacter salexigens (strain ATCC BAA-138 / DSM 3043 / CIP 106854 / NCIMB 13768 / 1H11).